Here is a 234-residue protein sequence, read N- to C-terminus: N-(5'-phosphoribosyl)anthranilate isomerase 1 (234 aa).

It belongs to the TrpF family.

The catalysed reaction is N-(5-phospho-beta-D-ribosyl)anthranilate = 1-(2-carboxyphenylamino)-1-deoxy-D-ribulose 5-phosphate. It participates in amino-acid biosynthesis; L-tryptophan biosynthesis; L-tryptophan from chorismate: step 3/5. The chain is N-(5'-phosphoribosyl)anthranilate isomerase 1 (trpF1) from Methanosarcina mazei (strain ATCC BAA-159 / DSM 3647 / Goe1 / Go1 / JCM 11833 / OCM 88) (Methanosarcina frisia).